Reading from the N-terminus, the 418-residue chain is Gamma-glutamyl phosphate reductase (418 aa).

It belongs to the gamma-glutamyl phosphate reductase family.

It is found in the cytoplasm. The catalysed reaction is L-glutamate 5-semialdehyde + phosphate + NADP(+) = L-glutamyl 5-phosphate + NADPH + H(+). Its pathway is amino-acid biosynthesis; L-proline biosynthesis; L-glutamate 5-semialdehyde from L-glutamate: step 2/2. Catalyzes the NADPH-dependent reduction of L-glutamate 5-phosphate into L-glutamate 5-semialdehyde and phosphate. The product spontaneously undergoes cyclization to form 1-pyrroline-5-carboxylate. This is Gamma-glutamyl phosphate reductase from Halothermothrix orenii (strain H 168 / OCM 544 / DSM 9562).